The chain runs to 84 residues: U-scoloptoxin(10)-Er1a (84 aa).

The N-terminal stretch at 1–24 (MSRFCLLFVAFGFVLYFLHMEVTG) is a signal peptide.

Belongs to the scoloptoxin-10 family. Post-translationally, contains 3 disulfide bonds. In terms of tissue distribution, expressed by the venom gland.

The protein localises to the secreted. This is U-scoloptoxin(10)-Er1a from Ethmostigmus rubripes (Giant centipede).